A 467-amino-acid chain; its full sequence is Solute carrier family 52, riboflavin transporter, member 3 (467 aa).

Residues 1 to 2 (MA) are Cytoplasmic-facing. A helical membrane pass occupies residues 3–23 (FLIHLLVCTFGMGSWVAINGL). Residues 24 to 43 (WVELPLLVTELPEGWYLPSY) are Extracellular-facing. Residues 44–64 (LTVIIQLANVGPLLVTLLHHF) form a helical membrane-spanning segment. Over 65 to 71 (RPGCLSE) the chain is Cytoplasmic. A helical membrane pass occupies residues 72–92 (VAVVFTVLGVGTIACTLFAFL). Topologically, residues 93–105 (WNVTSWVLGSRHS) are extracellular. A glycan (N-linked (GlcNAc...) asparagine) is linked at asparagine 94. A helical membrane pass occupies residues 106-126 (IAFLVLTFFLALVDCTSSVTF). Topologically, residues 127–137 (LPFMSRLPTYY) are cytoplasmic. A helical transmembrane segment spans residues 138-158 (LTTFFVGEGLSGLLPALVALA). Residues 159 to 220 (QGSGLTTCVN…SRYLPANFSP (62 aa)) lie on the Extracellular side of the membrane. The N-linked (GlcNAc...) asparagine glycan is linked to asparagine 168. A helical membrane pass occupies residues 221–241 (LVFFLLLSFMMACCFISFFFL). Residues 242-294 (QRQPKRWEASIEDLLTSQVTLNSIRPQEGKDLGPPEESGKAQDPPEEKTAPQH) are Cytoplasmic-facing. At serine 251 the chain carries Phosphoserine. Residues 266-288 (RPQEGKDLGPPEESGKAQDPPEE) are disordered. The segment covering 268–288 (QEGKDLGPPEESGKAQDPPEE) has biased composition (basic and acidic residues). Residues 295–315 (LAHLTFIYVLVAFVNALTNGV) form a helical membrane-spanning segment. Residues 316-333 (LPSVQTYSCLSYGPVAYH) are Extracellular-facing. The helical transmembrane segment at 334–354 (LSATLSSMASPLTCFLSIFLP) threads the bilayer. At 355–359 (NRSLP) the chain is on the cytoplasmic side. Residues 360-380 (FLGVLAVLGTSFGAYNMAMAV) form a helical membrane-spanning segment. Over 381-394 (MSPCPFMQGHWGGE) the chain is Extracellular. A helical transmembrane segment spans residues 395–415 (VLIVVSWVLFTGCLSYVKVML). Topologically, residues 416-425 (GVILRDHSRS) are cytoplasmic. A helical transmembrane segment spans residues 426-446 (ALLWCGAAVQLGSLLGAVVMF). Residues 447–467 (PLVNVLRLFSSADFCSLQCSA) are Extracellular-facing.

The protein belongs to the riboflavin transporter family.

The protein resides in the cell membrane. The catalysed reaction is riboflavin(in) = riboflavin(out). In terms of biological role, plasma membrane transporter mediating the uptake by cells of the water soluble vitamin B2/riboflavin that plays a key role in biochemical oxidation-reduction reactions of the carbohydrate, lipid, and amino acid metabolism. This chain is Solute carrier family 52, riboflavin transporter, member 3 (SLC52A3), found in Bos taurus (Bovine).